A 38-amino-acid chain; its full sequence is MAKPNPNKQSVELNRTSLYWGLLLIFVLAVLFSSYIFN.

A helical membrane pass occupies residues 17 to 37 (SLYWGLLLIFVLAVLFSSYIF).

The protein belongs to the PsbL family. As to quaternary structure, PSII is composed of 1 copy each of membrane proteins PsbA, PsbB, PsbC, PsbD, PsbE, PsbF, PsbH, PsbI, PsbJ, PsbK, PsbL, PsbM, PsbT, PsbX, PsbY, PsbZ, Psb30/Ycf12, at least 3 peripheral proteins of the oxygen-evolving complex and a large number of cofactors. It forms dimeric complexes.

The protein localises to the plastid. Its subcellular location is the chloroplast thylakoid membrane. Functionally, one of the components of the core complex of photosystem II (PSII). PSII is a light-driven water:plastoquinone oxidoreductase that uses light energy to abstract electrons from H(2)O, generating O(2) and a proton gradient subsequently used for ATP formation. It consists of a core antenna complex that captures photons, and an electron transfer chain that converts photonic excitation into a charge separation. This subunit is found at the monomer-monomer interface and is required for correct PSII assembly and/or dimerization. This is Photosystem II reaction center protein L from Oltmannsiellopsis viridis (Marine flagellate).